We begin with the raw amino-acid sequence, 1419 residues long: DNA-directed RNA polymerase subunit beta' (1419 aa).

Residues Cys71, Cys73, Cys86, and Cys89 each contribute to the Zn(2+) site. The Mg(2+) site is built by Asp461, Asp463, and Asp465. 4 residues coordinate Zn(2+): Cys815, Cys889, Cys896, and Cys899.

It belongs to the RNA polymerase beta' chain family. The RNAP catalytic core consists of 2 alpha, 1 beta, 1 beta' and 1 omega subunit. When a sigma factor is associated with the core the holoenzyme is formed, which can initiate transcription. Mg(2+) serves as cofactor. The cofactor is Zn(2+).

It carries out the reaction RNA(n) + a ribonucleoside 5'-triphosphate = RNA(n+1) + diphosphate. Functionally, DNA-dependent RNA polymerase catalyzes the transcription of DNA into RNA using the four ribonucleoside triphosphates as substrates. This is DNA-directed RNA polymerase subunit beta' from Actinobacillus succinogenes (strain ATCC 55618 / DSM 22257 / CCUG 43843 / 130Z).